Reading from the N-terminus, the 196-residue chain is Imidazole glycerol phosphate synthase subunit HisH (196 aa).

The Glutamine amidotransferase type-1 domain maps to lysine 2–isoleucine 196. Cysteine 77 functions as the Nucleophile in the catalytic mechanism. Catalysis depends on residues histidine 178 and glutamate 180.

As to quaternary structure, heterodimer of HisH and HisF.

The protein localises to the cytoplasm. It catalyses the reaction 5-[(5-phospho-1-deoxy-D-ribulos-1-ylimino)methylamino]-1-(5-phospho-beta-D-ribosyl)imidazole-4-carboxamide + L-glutamine = D-erythro-1-(imidazol-4-yl)glycerol 3-phosphate + 5-amino-1-(5-phospho-beta-D-ribosyl)imidazole-4-carboxamide + L-glutamate + H(+). The enzyme catalyses L-glutamine + H2O = L-glutamate + NH4(+). It functions in the pathway amino-acid biosynthesis; L-histidine biosynthesis; L-histidine from 5-phospho-alpha-D-ribose 1-diphosphate: step 5/9. Functionally, IGPS catalyzes the conversion of PRFAR and glutamine to IGP, AICAR and glutamate. The HisH subunit catalyzes the hydrolysis of glutamine to glutamate and ammonia as part of the synthesis of IGP and AICAR. The resulting ammonia molecule is channeled to the active site of HisF. The sequence is that of Imidazole glycerol phosphate synthase subunit HisH from Blochmanniella floridana.